The chain runs to 597 residues: ATP-dependent lipid A-core flippase (597 aa).

Helical transmembrane passes span Trp26–Ala46, Ile65–Ile85, Ile144–Leu164, Gly166–Val186, Ala250–Leu270, and Met276–Leu296. In terms of domain architecture, ABC transmembrane type-1 spans Ala29–Arg311. Residues Ile343–Leu579 form the ABC transporter domain. Residue Gly377–Ser384 coordinates ATP.

This sequence belongs to the ABC transporter superfamily. Lipid exporter (TC 3.A.1.106) family. As to quaternary structure, homodimer.

Its subcellular location is the cell inner membrane. It carries out the reaction ATP + H2O + lipid A-core oligosaccharideSide 1 = ADP + phosphate + lipid A-core oligosaccharideSide 2.. In terms of biological role, involved in lipopolysaccharide (LPS) biosynthesis. Translocates lipid A-core from the inner to the outer leaflet of the inner membrane. Transmembrane domains (TMD) form a pore in the inner membrane and the ATP-binding domain (NBD) is responsible for energy generation. This chain is ATP-dependent lipid A-core flippase, found in Nitrosococcus oceani (strain ATCC 19707 / BCRC 17464 / JCM 30415 / NCIMB 11848 / C-107).